The following is a 533-amino-acid chain: Probable protein kinase UbiB (533 aa).

The helical transmembrane segment at 24–44 (LILELPMLPWWLRLLGATLPW) threads the bilayer. Positions 126 to 494 (RFEREPLASA…WKGSRHDWLG (369 aa)) constitute a Protein kinase domain. Residues 132 to 140 (LASASVAQV) and K154 contribute to the ATP site. D289 serves as the catalytic Proton acceptor. The helical transmembrane segment at 510–530 (LGQQLEAWPAWVMLAGGVFLI) threads the bilayer.

This sequence belongs to the ABC1 family. UbiB subfamily.

The protein resides in the cell inner membrane. It participates in cofactor biosynthesis; ubiquinone biosynthesis [regulation]. In terms of biological role, is probably a protein kinase regulator of UbiI activity which is involved in aerobic coenzyme Q (ubiquinone) biosynthesis. This is Probable protein kinase UbiB from Pseudomonas aeruginosa (strain LESB58).